The following is a 216-amino-acid chain: ATP-dependent Clp protease proteolytic subunit (216 aa).

The active-site Nucleophile is the Ser101. Residue His126 is part of the active site.

It belongs to the peptidase S14 family. In terms of assembly, component of the chloroplastic Clp protease core complex.

It localises to the plastid. It is found in the chloroplast stroma. The enzyme catalyses Hydrolysis of proteins to small peptides in the presence of ATP and magnesium. alpha-casein is the usual test substrate. In the absence of ATP, only oligopeptides shorter than five residues are hydrolyzed (such as succinyl-Leu-Tyr-|-NHMec, and Leu-Tyr-Leu-|-Tyr-Trp, in which cleavage of the -Tyr-|-Leu- and -Tyr-|-Trp bonds also occurs).. Cleaves peptides in various proteins in a process that requires ATP hydrolysis. Has a chymotrypsin-like activity. Plays a major role in the degradation of misfolded proteins. This is ATP-dependent Clp protease proteolytic subunit from Hordeum vulgare (Barley).